The primary structure comprises 185 residues: Small ribosomal subunit protein uS4c (185 aa).

An S4 RNA-binding domain is found at 72 to 134 (MRLDNVIFRL…PTSCNALKGE (63 aa)). Positions 132-154 (KGESPGGGETPDHLTASLSEGSR) are disordered.

This sequence belongs to the universal ribosomal protein uS4 family. Part of the 30S ribosomal subunit. Contacts protein S5. The interaction surface between S4 and S5 is involved in control of translational fidelity.

It localises to the plastid. The protein localises to the chloroplast. In terms of biological role, one of the primary rRNA binding proteins, it binds directly to 16S rRNA where it nucleates assembly of the body of the 30S subunit. Its function is as follows. With S5 and S12 plays an important role in translational accuracy. This chain is Small ribosomal subunit protein uS4c (rps4), found in Woodwardia unigemmata (Chainfern).